Consider the following 519-residue polypeptide: 3-octaprenyl-4-hydroxybenzoate carboxy-lyase (519 aa).

Residue asparagine 177 participates in Mn(2+) binding. Residues 180 to 182, 194 to 196, and 199 to 200 each bind prenylated FMN; these read IYR, RWL, and RG. A Mn(2+)-binding site is contributed by glutamate 243. The Proton donor role is filled by aspartate 318.

The protein belongs to the UbiD family. In terms of assembly, homohexamer. Requires prenylated FMN as cofactor. It depends on Mn(2+) as a cofactor.

Its subcellular location is the cell membrane. It catalyses the reaction a 4-hydroxy-3-(all-trans-polyprenyl)benzoate + H(+) = a 2-(all-trans-polyprenyl)phenol + CO2. Its pathway is cofactor biosynthesis; ubiquinone biosynthesis. Catalyzes the decarboxylation of 3-octaprenyl-4-hydroxy benzoate to 2-octaprenylphenol, an intermediate step in ubiquinone biosynthesis. The chain is 3-octaprenyl-4-hydroxybenzoate carboxy-lyase from Burkholderia mallei (strain ATCC 23344).